Here is a 487-residue protein sequence, read N- to C-terminus: UDP-N-acetylmuramoyl-L-alanyl-D-glutamate--2,6-diaminopimelate ligase (487 aa).

UDP-N-acetyl-alpha-D-muramoyl-L-alanyl-D-glutamate contacts are provided by Leu23 and Ser25. 108 to 114 (GTNGKTS) is a binding site for ATP. UDP-N-acetyl-alpha-D-muramoyl-L-alanyl-D-glutamate is bound by residues 150-151 (TT), Ser177, Gln183, and Arg185. Lys217 is subject to N6-carboxylysine. Meso-2,6-diaminopimelate-binding positions include Arg378, 402–405 (DNPR), Gly453, and Glu457. Residues 402 to 405 (DNPR) carry the Meso-diaminopimelate recognition motif motif.

It belongs to the MurCDEF family. MurE subfamily. The cofactor is Mg(2+). Carboxylation is probably crucial for Mg(2+) binding and, consequently, for the gamma-phosphate positioning of ATP.

It localises to the cytoplasm. The catalysed reaction is UDP-N-acetyl-alpha-D-muramoyl-L-alanyl-D-glutamate + meso-2,6-diaminopimelate + ATP = UDP-N-acetyl-alpha-D-muramoyl-L-alanyl-gamma-D-glutamyl-meso-2,6-diaminopimelate + ADP + phosphate + H(+). It functions in the pathway cell wall biogenesis; peptidoglycan biosynthesis. In terms of biological role, catalyzes the addition of meso-diaminopimelic acid to the nucleotide precursor UDP-N-acetylmuramoyl-L-alanyl-D-glutamate (UMAG) in the biosynthesis of bacterial cell-wall peptidoglycan. In Ectopseudomonas mendocina (strain ymp) (Pseudomonas mendocina), this protein is UDP-N-acetylmuramoyl-L-alanyl-D-glutamate--2,6-diaminopimelate ligase.